The following is a 190-amino-acid chain: Spermatogenesis-associated protein 12 (190 aa).

In terms of tissue distribution, expressed in testis.

In Homo sapiens (Human), this protein is Spermatogenesis-associated protein 12 (SPATA12).